Consider the following 117-residue polypeptide: uncharacterized protein (117 aa).

The protein belongs to the mimivirus R69 family.

This is an uncharacterized protein from Acanthamoeba polyphaga mimivirus (APMV).